A 206-amino-acid polypeptide reads, in one-letter code: Urease accessory protein UreG (206 aa).

14–21 contributes to the GTP binding site; sequence GPVGSGKT.

This sequence belongs to the SIMIBI class G3E GTPase family. UreG subfamily. As to quaternary structure, homodimer. UreD, UreF and UreG form a complex that acts as a GTP-hydrolysis-dependent molecular chaperone, activating the urease apoprotein by helping to assemble the nickel containing metallocenter of UreC. The UreE protein probably delivers the nickel.

The protein resides in the cytoplasm. Its function is as follows. Facilitates the functional incorporation of the urease nickel metallocenter. This process requires GTP hydrolysis, probably effectuated by UreG. This is Urease accessory protein UreG from Brucella anthropi (strain ATCC 49188 / DSM 6882 / CCUG 24695 / JCM 21032 / LMG 3331 / NBRC 15819 / NCTC 12168 / Alc 37) (Ochrobactrum anthropi).